Reading from the N-terminus, the 119-residue chain is ATP-dependent Clp protease adapter protein ClpS (119 aa).

Residues 1 to 33 (MATRIPKTPSTPPAQKPAGDDGDSVVLERRPQK) are disordered.

The protein belongs to the ClpS family. In terms of assembly, binds to the N-terminal domain of the chaperone ClpA.

Functionally, involved in the modulation of the specificity of the ClpAP-mediated ATP-dependent protein degradation. This Variovorax paradoxus (strain S110) protein is ATP-dependent Clp protease adapter protein ClpS.